Consider the following 199-residue polypeptide: NAD(P)H dehydrogenase (quinone) (199 aa).

The Flavodoxin-like domain maps to 4-190 (MLVLYYSAYG…DGARFQGRRV (187 aa)). Residues 10 to 15 (SAYGHM) and 78 to 80 (TRY) contribute to the FMN site. Position 12 (tyrosine 12) interacts with NAD(+). Tryptophan 98 provides a ligand contact to substrate. FMN is bound by residues 113–119 (STATQYG) and histidine 134. Positions 161–181 (YGMTTTADGDGSRQPSAQELD) are disordered. Over residues 163-177 (MTTTADGDGSRQPSA) the composition is skewed to polar residues.

This sequence belongs to the WrbA family. FMN is required as a cofactor.

The enzyme catalyses a quinone + NADH + H(+) = a quinol + NAD(+). It catalyses the reaction a quinone + NADPH + H(+) = a quinol + NADP(+). In Brucella canis (strain ATCC 23365 / NCTC 10854 / RM-666), this protein is NAD(P)H dehydrogenase (quinone).